A 275-amino-acid chain; its full sequence is Adenylate kinase 2 (275 aa).

Gly-2 carries N-myristoyl glycine lipidation. Residues 21–30 (KKKEKKKKKK) form a required for cell membrane translocation but dispensable for cell membrane localization region. Position 39-44 (39-44 (GSGKDT)) interacts with ATP. An NMP region spans residues 59–97 (CISKLLKEYKEEYNKENVLNEEENYFDEIEKCMIDGSLV). AMP is bound by residues 95–97 (SLV), 126–129 (GFPR), and Gln-133. Arg-164 serves as a coordination point for ATP. Residues 165–214 (IIDPITNISYNENIIQIIKKKREGQELSDKEQKQLIIDNHLYNNLSNDIL) form an LID region. AMP is bound by residues Arg-220 and Arg-231.

The protein belongs to the adenylate kinase family. In terms of assembly, monomer. Oligomer. Heterodimer composed of NMT and AK2; AK2 myristoylation stabilizes the complex. In terms of processing, myristoylation is required for cell membrane localization. Post-translationally, may be palmitoylated at Cys-4 which stabilizes cell membrane localization of the myristoylated protein.

The protein localises to the parasitophorous vacuole membrane. It carries out the reaction AMP + ATP = 2 ADP. In terms of biological role, catalyzes the reversible transfer of the terminal phosphate group between ATP and AMP. Has very low activity with CTP, GTP, ITP and UTP and no activity with GMP, UMP or IMP in vitro. The protein is Adenylate kinase 2 of Plasmodium falciparum (isolate 3D7).